A 194-amino-acid polypeptide reads, in one-letter code: Protein GrpE (194 aa).

Residues Met-1–Met-44 form a disordered region. Residues Glu-9–Glu-25 show a composition bias toward acidic residues.

This sequence belongs to the GrpE family. In terms of assembly, homodimer.

It is found in the cytoplasm. Functionally, participates actively in the response to hyperosmotic and heat shock by preventing the aggregation of stress-denatured proteins, in association with DnaK and GrpE. It is the nucleotide exchange factor for DnaK and may function as a thermosensor. Unfolded proteins bind initially to DnaJ; upon interaction with the DnaJ-bound protein, DnaK hydrolyzes its bound ATP, resulting in the formation of a stable complex. GrpE releases ADP from DnaK; ATP binding to DnaK triggers the release of the substrate protein, thus completing the reaction cycle. Several rounds of ATP-dependent interactions between DnaJ, DnaK and GrpE are required for fully efficient folding. This Bacillus licheniformis (strain ATCC 14580 / DSM 13 / JCM 2505 / CCUG 7422 / NBRC 12200 / NCIMB 9375 / NCTC 10341 / NRRL NRS-1264 / Gibson 46) protein is Protein GrpE.